The sequence spans 326 residues: Biotin synthase (326 aa).

The Radical SAM core domain occupies 51–278 (NEVQRSTLLS…TSYVRLSAGR (228 aa)). The [4Fe-4S] cluster site is built by Cys-66, Cys-70, and Cys-73. [2Fe-2S] cluster-binding residues include Cys-110, Cys-141, Cys-201, and Arg-273.

The protein belongs to the radical SAM superfamily. Biotin synthase family. In terms of assembly, homodimer. [4Fe-4S] cluster serves as cofactor. It depends on [2Fe-2S] cluster as a cofactor.

The enzyme catalyses (4R,5S)-dethiobiotin + (sulfur carrier)-SH + 2 reduced [2Fe-2S]-[ferredoxin] + 2 S-adenosyl-L-methionine = (sulfur carrier)-H + biotin + 2 5'-deoxyadenosine + 2 L-methionine + 2 oxidized [2Fe-2S]-[ferredoxin]. Its pathway is cofactor biosynthesis; biotin biosynthesis; biotin from 7,8-diaminononanoate: step 2/2. Its function is as follows. Catalyzes the conversion of dethiobiotin (DTB) to biotin by the insertion of a sulfur atom into dethiobiotin via a radical-based mechanism. The chain is Biotin synthase from Azoarcus sp. (strain BH72).